The chain runs to 458 residues: Cysteine--tRNA ligase (458 aa).

Cysteine 29 contacts Zn(2+). Residues 31–41 carry the 'HIGH' region motif; sequence MTVYDLCHLGH. Positions 213, 238, and 242 each coordinate Zn(2+). The 'KMSKS' region signature appears at 270–274; sequence KMSKS. An ATP-binding site is contributed by lysine 273.

Belongs to the class-I aminoacyl-tRNA synthetase family. As to quaternary structure, monomer. Requires Zn(2+) as cofactor.

It is found in the cytoplasm. The enzyme catalyses tRNA(Cys) + L-cysteine + ATP = L-cysteinyl-tRNA(Cys) + AMP + diphosphate. The protein is Cysteine--tRNA ligase of Acidovorax sp. (strain JS42).